A 468-amino-acid polypeptide reads, in one-letter code: Probable citrate synthase, mitochondrial (468 aa).

Residues H303, H349, and D404 contribute to the active site.

Belongs to the citrate synthase family. In terms of assembly, homodimer.

The protein localises to the mitochondrion matrix. The enzyme catalyses oxaloacetate + acetyl-CoA + H2O = citrate + CoA + H(+). It functions in the pathway carbohydrate metabolism; tricarboxylic acid cycle; isocitrate from oxaloacetate: step 1/2. This is Probable citrate synthase, mitochondrial (cts-1) from Caenorhabditis elegans.